The sequence spans 108 residues: Large ribosomal subunit protein P2A (108 aa).

The disordered stretch occupies residues 62 to 108 (LSSVPSGAPAAAAGGASAAAGGEATEEAAEEEAAEESDDDMSFGLFD). Residues 68 to 84 (GAPAAAAGGASAAAGGE) show a composition bias toward low complexity. The segment covering 85 to 102 (ATEEAAEEEAAEESDDDM) has biased composition (acidic residues). Ser-98 bears the Phosphoserine mark.

Belongs to the eukaryotic ribosomal protein P1/P2 family.

Functionally, plays an important role in the elongation step of protein synthesis. This chain is Large ribosomal subunit protein P2A (RPP2A), found in Candida albicans (Yeast).